Here is a 134-residue protein sequence, read N- to C-terminus: Large ribosomal subunit protein uL16c (134 aa).

Positions methionine 1–methionine 17 are enriched in basic residues. The disordered stretch occupies residues methionine 1–serine 21.

The protein belongs to the universal ribosomal protein uL16 family. As to quaternary structure, part of the 50S ribosomal subunit.

It is found in the plastid. The protein localises to the chloroplast. This Solanum bulbocastanum (Wild potato) protein is Large ribosomal subunit protein uL16c.